A 389-amino-acid chain; its full sequence is UDP-GlcNAc:betaGal beta-1,3-N-acetylglucosaminyltransferase 8 (389 aa).

Residues 1–7 lie on the Cytoplasmic side of the membrane; the sequence is MRCRKCQ. Residues 8-24 traverse the membrane as a helical; Signal-anchor for type II membrane protein segment; it reads LCLSALLTLLGLKVYIE. The Lumenal segment spans residues 25–389; the sequence is WTSESWLKKA…RHLWVPELQC (365 aa). The disordered stretch occupies residues 36–57; sequence PRGALPSPTPPNAEPTLPTNLS. Residues Asn55 and Asn212 are each glycosylated (N-linked (GlcNAc...) asparagine).

It belongs to the glycosyltransferase 31 family. As to quaternary structure, interacts with B3GNT2; this interaction greatly increases B3GNT2 catalytic activity, independently of B3GNT8 enzymatic activity.

The protein localises to the golgi apparatus membrane. Its pathway is protein modification; protein glycosylation. Its function is as follows. Beta-1,3-N-acetylglucosaminyltransferase that plays a role in the elongation of specific branch structures of multiantennary N-glycans. Has strong activity towards tetraantennary N-glycans and 2,6 triantennary glycans. The chain is UDP-GlcNAc:betaGal beta-1,3-N-acetylglucosaminyltransferase 8 from Mus musculus (Mouse).